The sequence spans 138 residues: MAKATSSAPSQRMLRVGEQVRAALTQILQRGEVRDDLIEGTVISISEVRMSPDLKIATAYVTPLGVADHTDIISALNRHAKFMRGRLGPQLRQMKYMPELRFRDDTSFDNYQKIDALLRSPEVQRDLGPSNEKDDEQN.

Residues 119–138 (RSPEVQRDLGPSNEKDDEQN) form a disordered region.

This sequence belongs to the RbfA family. Monomer. Binds 30S ribosomal subunits, but not 50S ribosomal subunits or 70S ribosomes.

It localises to the cytoplasm. Its function is as follows. One of several proteins that assist in the late maturation steps of the functional core of the 30S ribosomal subunit. Associates with free 30S ribosomal subunits (but not with 30S subunits that are part of 70S ribosomes or polysomes). Required for efficient processing of 16S rRNA. May interact with the 5'-terminal helix region of 16S rRNA. The protein is Ribosome-binding factor A of Agrobacterium fabrum (strain C58 / ATCC 33970) (Agrobacterium tumefaciens (strain C58)).